An 880-amino-acid chain; its full sequence is GAS2-like protein 2 (880 aa).

Residues 32-159 (EAMKEDLAEW…CLLELGRRAW (128 aa)) form the Calponin-homology (CH) domain. The interval 180-200 (RRELALPPPDPSPPAPPRRQP) is disordered. Positions 185 to 198 (LPPPDPSPPAPPRR) are enriched in pro residues. The 73-residue stretch at 201–273 (CHFRNLDQMV…HYLDKHDPCR (73 aa)) folds into the GAR domain. Disordered stretches follow at residues 283 to 360 (SFLK…MAPF), 372 to 437 (WRQP…NPTP), 489 to 533 (ESVR…ELGR), and 676 to 880 (APTG…ESWV). Over residues 301–315 (GPSQTQPTMTISRSQ) the composition is skewed to polar residues. Residues 438–880 (QRLRAIEATT…PLPPEEESWV (443 aa)) form an interaction with ADORA2A region. Over residues 506–515 (RLPPARPPTP) the composition is skewed to pro residues. Residues 725 to 734 (QDCSASTVSA) show a composition bias toward polar residues. Composition is skewed to basic residues over residues 757 to 767 (KGRRTLRKPKR) and 774 to 785 (LKLRPRIRPRRD).

The protein belongs to the GAS2 family. Interacts with ADORA2A (via its cytoplasmic C-terminal domain). Interacts with GNAS, GNAL, GNAQ, and GNA13. Interacts with MAPRE1. As to expression, expressed in bronchial and nasal epithelial cells (at protein level). Expressed in brain, kidney, lung, testis, fallopian tubes, and skeletal muscle. Expressed at low levels in stomach and colon.

It localises to the cytoplasm. It is found in the cytoskeleton. The protein resides in the cell membrane. The protein localises to the stress fiber. Its subcellular location is the cilium basal body. In terms of biological role, involved in the cross-linking of microtubules and microfilaments. Regulates microtubule dynamics and stability by interacting with microtubule plus-end tracking proteins, such as MAPRE1, to regulate microtubule growth along actin stress fibers. Enhances ADORA2-mediated adenylyl cyclase activation by acting as a scaffold to recruit trimeric G-protein complexes to ADORA2A. Regulates ciliary orientation and performance in cells located in the airway. The chain is GAS2-like protein 2 (GAS2L2) from Homo sapiens (Human).